The following is a 335-amino-acid chain: Protein-arginine kinase (335 aa).

The region spanning 21 to 244 (IVMSSRIRLA…NQIIHEEKQI (224 aa)) is the Phosphagen kinase C-terminal domain. Residues 24-28 (SSRIR), H82, R115, 166-170 (RASVM), and 197-202 (RGIYGE) each bind ATP.

It belongs to the ATP:guanido phosphotransferase family.

The enzyme catalyses L-arginyl-[protein] + ATP = N(omega)-phospho-L-arginyl-[protein] + ADP + H(+). In terms of biological role, catalyzes the specific phosphorylation of arginine residues in proteins. The polypeptide is Protein-arginine kinase (Staphylococcus aureus (strain USA300)).